Consider the following 220-residue polypeptide: Adenylate kinase (220 aa).

ATP is bound at residue 10 to 15; the sequence is GAGKGT. The NMP stretch occupies residues 30–59; sequence STGDMLRAAVKAGTPLGVEAKTYMDEGKLV. AMP is bound by residues T31, R36, 57–59, 85–88, and Q92; these read KLV and GFPR. The interval 122–159 is LID; that stretch reads GRRTHPASGRTYHVKFNPPKVEGKDDVTGEPLVQRDDD. ATP-binding positions include R123 and 132–133; that span reads TY. AMP-binding residues include R156 and R167. G206 contributes to the ATP binding site.

It belongs to the adenylate kinase family. In terms of assembly, monomer.

It is found in the cytoplasm. The enzyme catalyses AMP + ATP = 2 ADP. It functions in the pathway purine metabolism; AMP biosynthesis via salvage pathway; AMP from ADP: step 1/1. Its function is as follows. Catalyzes the reversible transfer of the terminal phosphate group between ATP and AMP. Plays an important role in cellular energy homeostasis and in adenine nucleotide metabolism. The protein is Adenylate kinase of Burkholderia mallei (strain NCTC 10247).